The primary structure comprises 147 residues: PTPN13-like protein, Y-linked (147 aa).

As to expression, expressed in testis. Detected in spermatocytes, spermatids and spermatozoa (at protein level).

In Homo sapiens (Human), this protein is PTPN13-like protein, Y-linked (PRY).